A 135-amino-acid polypeptide reads, in one-letter code: uncharacterized protein (135 aa).

Positions 8-123 (PKGKMVLRTL…IFVYVAVDEF (116 aa)) constitute a HotDog ACOT-type domain.

Belongs to the acyl coenzyme A hydrolase family.

This is an uncharacterized protein from Buchnera aphidicola subsp. Baizongia pistaciae (strain Bp).